The chain runs to 642 residues: Glutamyl-tRNA(Gln) amidotransferase subunit E (642 aa).

It belongs to the GatB/GatE family. GatE subfamily. Heterodimer of GatD and GatE.

The enzyme catalyses L-glutamyl-tRNA(Gln) + L-glutamine + ATP + H2O = L-glutaminyl-tRNA(Gln) + L-glutamate + ADP + phosphate + H(+). Its function is as follows. Allows the formation of correctly charged Gln-tRNA(Gln) through the transamidation of misacylated Glu-tRNA(Gln) in organisms which lack glutaminyl-tRNA synthetase. The reaction takes place in the presence of glutamine and ATP through an activated gamma-phospho-Glu-tRNA(Gln). The GatDE system is specific for glutamate and does not act on aspartate. The protein is Glutamyl-tRNA(Gln) amidotransferase subunit E of Aeropyrum pernix (strain ATCC 700893 / DSM 11879 / JCM 9820 / NBRC 100138 / K1).